We begin with the raw amino-acid sequence, 193 residues long: Cbp/p300-interacting transactivator 1 (193 aa).

Disordered regions lie at residues 1-26, 50-88, and 106-147; these read MPTT…NQEM, VASN…LHPA, and GMAA…SPAI. The span at 54–73 shows a compositional bias: low complexity; it reads GTKASGAPTSSSGSPIGSPT. Residues 158 to 167 carry the Nuclear export signal motif; it reads LMSLVVELGL.

The protein belongs to the CITED family. Interacts (via C-terminus) with CREBBP. Interacts with EGR2. Homodimer. Binds to RBM14. Interacts (via N-terminus) with HSPA8; the interaction suppresses the association of CITED1 with p300/CBP and SMAD-mediated transcription transactivation. Interacts (via C-terminus) with TOX3 (via HGM box); the interaction increases estrogen-response element (ERE)-dependent transcription and protection against cell death. Interacts with ESR1; the interaction occurs in a estrogen-dependent manner. Interacts (unphosphorylated form preferentially and via C-terminus) with EP300. In terms of processing, phosphorylated. Phosphorylation changes in a cell cycle-dependent manner and reduces its transcriptional coactivator activity. As to expression, expressed only in melanocytes and testis.

It is found in the nucleus. Its subcellular location is the cytoplasm. Functionally, transcriptional coactivator of the p300/CBP-mediated transcription complex. Enhances SMAD-mediated transcription by strengthening the functional link between the DNA-binding SMAD transcription factors and the p300/CBP transcription coactivator complex. Stimulates estrogen-dependent transactivation activity mediated by estrogen receptors signaling; stabilizes the interaction of estrogen receptor ESR1 and histone acetyltransferase EP300. Positively regulates TGF-beta signaling through its association with the SMAD/p300/CBP-mediated transcriptional coactivator complex. Induces transcription from estrogen-responsive promoters and protection against cell death. Potentiates EGR2-mediated transcriptional activation activity from the ERBB2 promoter. Acts as an inhibitor of osteoblastic mineralization through a cAMP-dependent parathyroid hormone receptor signaling. May play a role in pigmentation of melanocytes. Associates with chromatin to the estrogen-responsive TGF-alpha promoter region in a estrogen-dependent manner. The protein is Cbp/p300-interacting transactivator 1 (CITED1) of Homo sapiens (Human).